We begin with the raw amino-acid sequence, 254 residues long: NADPH-dependent ferric-chelate reductase (254 aa).

Positions 15 to 136 (LRFRELTVLR…AGPRGSLVVP (122 aa)) constitute an FAD-binding FR-type domain.

Belongs to the SIP oxidoreductase family.

The protein localises to the cytoplasm. It carries out the reaction 2 a Fe(II)-siderophore + NADP(+) + H(+) = 2 a Fe(III)-siderophore + NADPH. Functionally, plays a role in iron homeostasis under excess nickel conditions. In Escherichia coli (strain K12), this protein is NADPH-dependent ferric-chelate reductase (yqjH).